Consider the following 571-residue polypeptide: Proline--tRNA ligase (571 aa).

It belongs to the class-II aminoacyl-tRNA synthetase family. ProS type 1 subfamily. In terms of assembly, homodimer.

It localises to the cytoplasm. The catalysed reaction is tRNA(Pro) + L-proline + ATP = L-prolyl-tRNA(Pro) + AMP + diphosphate. In terms of biological role, catalyzes the attachment of proline to tRNA(Pro) in a two-step reaction: proline is first activated by ATP to form Pro-AMP and then transferred to the acceptor end of tRNA(Pro). As ProRS can inadvertently accommodate and process non-cognate amino acids such as alanine and cysteine, to avoid such errors it has two additional distinct editing activities against alanine. One activity is designated as 'pretransfer' editing and involves the tRNA(Pro)-independent hydrolysis of activated Ala-AMP. The other activity is designated 'posttransfer' editing and involves deacylation of mischarged Ala-tRNA(Pro). The misacylated Cys-tRNA(Pro) is not edited by ProRS. This Shewanella putrefaciens (strain CN-32 / ATCC BAA-453) protein is Proline--tRNA ligase.